Here is a 215-residue protein sequence, read N- to C-terminus: UPF0319 protein VV2_0960 (215 aa).

A signal peptide spans 1-21; it reads MNIIKPLTCILAMSISGLATA.

Belongs to the UPF0319 family.

The protein is UPF0319 protein VV2_0960 of Vibrio vulnificus (strain CMCP6).